Reading from the N-terminus, the 78-residue chain is MKKQKLIDMEGVVTESLPNTMFRVCLDNGCQVLTHVSGRMRRNYIRILPGDRVKVESSPYDLTKGRITYRFHTKSSND.

The 72-residue stretch at 1-72 (MKKQKLIDME…TKGRITYRFH (72 aa)) folds into the S1-like domain.

This sequence belongs to the IF-1 family. As to quaternary structure, component of the 30S ribosomal translation pre-initiation complex which assembles on the 30S ribosome in the order IF-2 and IF-3, IF-1 and N-formylmethionyl-tRNA(fMet); mRNA recruitment can occur at any time during PIC assembly.

It is found in the plastid. It localises to the chloroplast. Its function is as follows. One of the essential components for the initiation of protein synthesis. Stabilizes the binding of IF-2 and IF-3 on the 30S subunit to which N-formylmethionyl-tRNA(fMet) subsequently binds. Helps modulate mRNA selection, yielding the 30S pre-initiation complex (PIC). Upon addition of the 50S ribosomal subunit IF-1, IF-2 and IF-3 are released leaving the mature 70S translation initiation complex. The polypeptide is Translation initiation factor IF-1, chloroplastic (Huperzia lucidula (Shining clubmoss)).